Reading from the N-terminus, the 320-residue chain is Cytochrome f (320 aa).

The N-terminal stretch at M1–A35 is a signal peptide. Heme is bound by residues Y36, C56, C59, and H60. The chain crosses the membrane as a helical span at residues V286–K306.

The protein belongs to the cytochrome f family. The 4 large subunits of the cytochrome b6-f complex are cytochrome b6, subunit IV (17 kDa polypeptide, petD), cytochrome f and the Rieske protein, while the 4 small subunits are PetG, PetL, PetM and PetN. The complex functions as a dimer. Heme is required as a cofactor.

The protein resides in the plastid. It localises to the chloroplast thylakoid membrane. Functionally, component of the cytochrome b6-f complex, which mediates electron transfer between photosystem II (PSII) and photosystem I (PSI), cyclic electron flow around PSI, and state transitions. The protein is Cytochrome f of Manihot esculenta (Cassava).